A 316-amino-acid polypeptide reads, in one-letter code: Tyrosine--tRNA ligase 2 (316 aa).

L-tyrosine contacts are provided by Tyr-26, Tyr-146, Gln-150, Asp-153, and Gln-168. Positions 219 to 223 (KMSKS) match the 'KMSKS' region motif. Lys-222 lines the ATP pocket.

The protein belongs to the class-I aminoacyl-tRNA synthetase family. TyrS type 4 subfamily. As to quaternary structure, homodimer.

The protein localises to the cytoplasm. It carries out the reaction tRNA(Tyr) + L-tyrosine + ATP = L-tyrosyl-tRNA(Tyr) + AMP + diphosphate + H(+). In terms of biological role, catalyzes the attachment of tyrosine to tRNA(Tyr) in a two-step reaction: tyrosine is first activated by ATP to form Tyr-AMP and then transferred to the acceptor end of tRNA(Tyr). The chain is Tyrosine--tRNA ligase 2 from Pyrobaculum aerophilum (strain ATCC 51768 / DSM 7523 / JCM 9630 / CIP 104966 / NBRC 100827 / IM2).